We begin with the raw amino-acid sequence, 1154 residues long: Caspase recruitment domain-containing protein 11 (1154 aa).

One can recognise a CARD domain in the interval 18-110; sequence EEDALWENVE…ELYKLVTGKE (93 aa). The linker stretch occupies residues 111–128; the sequence is PTRRFSTIVVEEGHEGLT. Residues 130–449 are a coiled coil; sequence FLMNEVIKLQ…KDSNNLDQSL (320 aa). Residues serine 448 and serine 466 each carry the phosphoserine modification. The segment at 450–666 is inhibitory domain (ID); it reads PRNLPVTIIS…GHVRGPGPSV (217 aa). Residues 460 to 626 form a disordered region; sequence QDFGDASPRT…HSSSSSHQSE (167 aa). The segment covering 473-484 has biased composition (acidic residues); sequence EADDSSTSEESP. At serine 512 the chain carries Phosphoserine. Residues 518-529 are compositionally biased toward basic and acidic residues; that stretch reads RTSDFQAKGHEE. Residues 534 to 562 show a composition bias toward polar residues; sequence ASPSSCGSLPITNSFTKMQPPRSRSSIMS. A Phosphoserine modification is found at serine 535. Residue serine 559 is modified to Phosphoserine; by PKC/PRKCB and PKC/PRKCQ. The segment covering 573–587 has biased composition (basic and acidic residues); sequence IVRRYKEDAPHRSTV. Phosphoserine is present on serine 593. A compositionally biased stretch (low complexity) spans 614 to 625; it reads SSIHSSSSSHQS. Serine 644 and serine 652 each carry phosphoserine; by PKC/PRKCB and PKC/PRKCQ. The 89-residue stretch at 667 to 755 folds into the PDZ domain; sequence QHTTLNGDSL…PVTLHYKVNH (89 aa). A phosphoserine mark is found at serine 886 and serine 925. In terms of domain architecture, Guanylate kinase-like spans 973–1140; the sequence is RRRPVLFTPT…LLRVVKDKIG (168 aa).

Homodimer; disulfide-linked. Homomultimer; polymerizes following activation, forming a nucleating helical template that seeds BCL10-filament formation via a CARD-CARD interaction. Interacts (via CARD domain) with BCL10 (via CARD domain); interaction takes place following CARD11 activation and polymerization, leading to the formation of a filamentous CBM complex assembly. Component of a CBM complex (CARD11-BCL10-MALT1) complex involved in NF-kappa-B activation. Found in a membrane raft complex, at least composed of BCL10, CARD11, DPP4 and IKBKB. Interacts (via PDZ domain) with DPP4 (via cytoplasmic tail). In terms of processing, phosphorylation at Ser-559, Ser-644 and Ser-652 by PRKCB and PRKCQ leads to a shift from an inactive to an active form that activates the NF-kappa-B signaling. Detected in adult peripheral blood leukocytes, thymus, spleen and liver. Also found in promyelocytic leukemia HL-60 cells, chronic myelogenous leukemia K-562 cells, Burkitt's lymphoma Raji cells and colorectal adenocarcinoma SW480 cells. Not detected in HeLaS3, MOLT-4, A-549 and G431 cells.

It is found in the cytoplasm. The protein resides in the membrane raft. Maintained in an autoinhibited state via homodimerization in which the CARD domain forms an extensive interaction with the adjacent linker and coiled-coil regions. Activation downstream of T-cell receptor (TCR) by phosphorylation by PRKCB and PRKCQ triggers CARD11 homooligomerization and BCL10 recruitment, followed by activation of NF-kappa-B. In terms of biological role, adapter protein that plays a key role in adaptive immune response by transducing the activation of NF-kappa-B downstream of T-cell receptor (TCR) and B-cell receptor (BCR) engagement. Transduces signals downstream TCR or BCR activation via the formation of a multiprotein complex together with BCL10 and MALT1 that induces NF-kappa-B and MAP kinase p38 (MAPK11, MAPK12, MAPK13 and/or MAPK14) pathways. Upon activation in response to TCR or BCR triggering, CARD11 homooligomerizes to form a nucleating helical template that recruits BCL10 via CARD-CARD interaction, thereby promoting polymerization of BCL10 and subsequent recruitment of MALT1: this leads to I-kappa-B kinase (IKK) phosphorylation and degradation, and release of NF-kappa-B proteins for nuclear translocation. Its binding to DPP4 induces T-cell proliferation and NF-kappa-B activation in a T-cell receptor/CD3-dependent manner. Promotes linear ubiquitination of BCL10 by promoting the targeting of BCL10 to RNF31/HOIP. Stimulates the phosphorylation of BCL10. Also activates the TORC1 signaling pathway. The sequence is that of Caspase recruitment domain-containing protein 11 from Homo sapiens (Human).